Reading from the N-terminus, the 203-residue chain is Suppressor/enhancer of lin-12 protein 9 (203 aa).

The N-terminal stretch at 1–18 (MNSLTWILAVLFVTPAAS) is a signal peptide. At 19-170 (YFIHVDANEE…RNINENTNSR (152 aa)) the chain is on the lumenal side. The region spanning 28 to 110 (EQCFFDRLTS…PKAVMFTVEI (83 aa)) is the GOLD domain. A helical transmembrane segment spans residues 171-191 (VVMWAAFEAFVLVGMTVGQIF). The Cytoplasmic portion of the chain corresponds to 192–203 (YLKRFFEVRTMV).

Belongs to the EMP24/GP25L family.

It is found in the cytoplasmic vesicle membrane. The protein resides in the cytoplasmic vesicle. It localises to the COPI-coated vesicle membrane. The protein localises to the golgi apparatus membrane. In terms of biological role, may have a role in the negative regulation of lin-12 and glp-1 transport to the cell surface. May also have a role in a quality control mechanism for endoplasmic reticulum-Golgi transport; the budding of coatomer-coated and other species of coated vesicles, could bind cargo molecules to collect them into budding vesicles. Involved in regulating the expression of proteasomal subunits such as rpt-3 in order to confer resistance to proteasomal dysfunction. The protein is Suppressor/enhancer of lin-12 protein 9 (sel-9) of Caenorhabditis elegans.